A 205-amino-acid polypeptide reads, in one-letter code: Glycerol-3-phosphate acyltransferase (205 aa).

Transmembrane regions (helical) follow at residues 5–25 (LIAT…YIIA), 56–76 (ICVL…AIAL), 84–104 (VPAL…YFGF), 114–134 (IGVV…VAIL), 144–164 (LGSL…LPFF), and 165–185 (HYPL…LWRH).

The protein belongs to the PlsY family. Probably interacts with PlsX.

Its subcellular location is the cell membrane. The catalysed reaction is an acyl phosphate + sn-glycerol 3-phosphate = a 1-acyl-sn-glycero-3-phosphate + phosphate. It participates in lipid metabolism; phospholipid metabolism. In terms of biological role, catalyzes the transfer of an acyl group from acyl-phosphate (acyl-PO(4)) to glycerol-3-phosphate (G3P) to form lysophosphatidic acid (LPA). This enzyme utilizes acyl-phosphate as fatty acyl donor, but not acyl-CoA or acyl-ACP. The protein is Glycerol-3-phosphate acyltransferase of Shouchella clausii (strain KSM-K16) (Alkalihalobacillus clausii).